Consider the following 373-residue polypeptide: STE20-related kinase adapter protein alpha (373 aa).

The region spanning 11 to 321 (YELLTVIGKG…ASTLLNHSFF (311 aa)) is the Protein kinase domain. Residues 255-281 (STSRSAANSGLSESLAPSTPRTSNGDS) show a composition bias toward polar residues. The tract at residues 255–288 (STSRSAANSGLSESLAPSTPRTSNGDSPSHPYHR) is disordered. T361 carries the phosphothreonine; by LKB1 modification.

It belongs to the protein kinase superfamily. STE Ser/Thr protein kinase family. STE20 subfamily. As to quaternary structure, component of a trimeric complex composed of STK11/LKB1, STRAD (STRADA or STRADB) and CAB39/MO25 (CAB39/MO25alpha or CAB39L/MO25beta): the complex tethers STK11/LKB1 in the cytoplasm and stimulates its catalytic activity.

It is found in the nucleus. It localises to the cytoplasm. Pseudokinase which, in complex with CAB39/MO25 (CAB39/MO25alpha or CAB39L/MO25beta), binds to and activates STK11/LKB1. Adopts a closed conformation typical of active protein kinases and binds STK11/LKB1 as a pseudosubstrate, promoting conformational change of STK11/LKB1 in an active conformation. In Bos taurus (Bovine), this protein is STE20-related kinase adapter protein alpha (STRADA).